A 186-amino-acid chain; its full sequence is Allergen Fel d 4 (186 aa).

The N-terminal stretch at 1 to 15 (MKLLLLCLGLILVCA) is a signal peptide. N-linked (GlcNAc...) asparagine glycosylation is found at Asn51 and Asn66. Cys81 and Cys171 form a disulfide bridge.

It belongs to the calycin superfamily. Lipocalin family. As to expression, abundant in urine (at protein level).

The protein resides in the secreted. Its function is as follows. May be a pheromone carrier. Acts as a kairomone, detected by the prey vomeronasal organ and inducing fear reactions in mice. This is Allergen Fel d 4 from Felis catus (Cat).